The chain runs to 536 residues: Lysosomal acid glucosylceramidase (536 aa).

A signal peptide spans 1–39 (MELSSPSREECPRPQGRVGIMAASLMGLLLLQAASWASG). Cystine bridges form between Cys-43–Cys-55 and Cys-57–Cys-62. Asn-58, Asn-98, and Asn-185 each carry an N-linked (GlcNAc...) asparagine glycan. Glu-274 serves as the catalytic Proton donor. Asn-309 carries an N-linked (GlcNAc...) asparagine glycan. Glu-379 functions as the Nucleophile in the catalytic mechanism. N-linked (GlcNAc...) asparagine glycosylation occurs at Asn-501.

Belongs to the glycosyl hydrolase 30 family. Interacts with saposin-C. Interacts with SCARB2. Interacts with TCP1. Interacts with GRN; this interaction prevents aggregation of GBA1-SCARB2 complex via interaction with HSPA1A upon stress.

It localises to the lysosome membrane. The enzyme catalyses a beta-D-glucosyl-(1&lt;-&gt;1')-N-acylsphing-4-enine + H2O = an N-acylsphing-4-enine + D-glucose. It catalyses the reaction a beta-D-galactosyl-(1&lt;-&gt;1')-N-acylsphing-4-enine + H2O = an N-acylsphing-4-enine + D-galactose. The catalysed reaction is cholesteryl 3-beta-D-glucoside + H2O = cholesterol + D-glucose. It carries out the reaction a beta-D-glucosyl-(1&lt;-&gt;1')-N-acylsphing-4-enine + cholesterol = cholesteryl 3-beta-D-glucoside + an N-acylsphing-4-enine. The enzyme catalyses beta-D-glucosyl-N-(9Z-octadecenoyl)-sphing-4E-enine + cholesterol = N-(9Z-octadecenoyl)-sphing-4-enine + cholesteryl 3-beta-D-glucoside. It catalyses the reaction beta-D-glucosyl-N-octanoylsphing-4E-enine + cholesterol = N-octanoylsphing-4-enine + cholesteryl 3-beta-D-glucoside. The catalysed reaction is beta-D-glucosyl-N-dodecanoylsphing-4-enine + cholesterol = N-dodecanoylsphing-4-enine + cholesteryl 3-beta-D-glucoside. It carries out the reaction beta-D-glucosyl-(1&lt;-&gt;1)-N-octadecanoylsphing-4-enine + cholesterol = N-octadecanoylsphing-4-enine + cholesteryl 3-beta-D-glucoside. The enzyme catalyses beta-D-glucosyl-(1&lt;-&gt;1')-N-(15Z-tetracosenoyl)-sphing-4-enine + cholesterol = N-(15Z-tetracosenoyl)-sphing-4-enine + cholesteryl 3-beta-D-glucoside. It catalyses the reaction a beta-D-galactosyl-(1&lt;-&gt;1')-N-acylsphing-4-enine + cholesterol = cholesteryl 3-beta-D-galactoside + an N-acylsphing-4-enine. The catalysed reaction is 1-(beta-D-galactosyl)-N-dodecanoylsphing-4-enine + cholesterol = cholesteryl 3-beta-D-galactoside + N-dodecanoylsphing-4-enine. It carries out the reaction a beta-D-xylosyl-(1&lt;-&gt;1')-N-acylsphing-4-enine + cholesterol = cholesteryl 3-beta-D-xyloside + an N-acylsphing-4-enine. The enzyme catalyses beta-D-xylosyl-(1&lt;-&gt;1')-N-(9Z-octadecenoyl)-sphing-4-enine + cholesterol = cholesteryl 3-beta-D-xyloside + N-(9Z-octadecenoyl)-sphing-4-enine. Its pathway is steroid metabolism; cholesterol metabolism. It functions in the pathway sphingolipid metabolism. Glucosylceramidase that catalyzes, within the lysosomal compartment, the hydrolysis of glucosylceramides/GlcCers (such as beta-D-glucosyl-(1&lt;-&gt;1')-N-acylsphing-4-enine) into free ceramides (such as N-acylsphing-4-enine) and glucose. Plays a central role in the degradation of complex lipids and the turnover of cellular membranes. Through the production of ceramides, participates in the PKC-activated salvage pathway of ceramide formation. Catalyzes the glucosylation of cholesterol, through a transglucosylation reaction where glucose is transferred from GlcCer to cholesterol. GlcCer containing mono-unsaturated fatty acids (such as beta-D-glucosyl-N-(9Z-octadecenoyl)-sphing-4-enine) are preferred as glucose donors for cholesterol glucosylation when compared with GlcCer containing same chain length of saturated fatty acids (such as beta-D-glucosyl-N-octadecanoyl-sphing-4-enine). Under specific conditions, may alternatively catalyze the reverse reaction, transferring glucose from cholesteryl 3-beta-D-glucoside to ceramide. Can also hydrolyze cholesteryl 3-beta-D-glucoside producing glucose and cholesterol. Catalyzes the hydrolysis of galactosylceramides/GalCers (such as beta-D-galactosyl-(1&lt;-&gt;1')-N-acylsphing-4-enine), as well as the transfer of galactose between GalCers and cholesterol in vitro, but with lower activity than with GlcCers. Contrary to GlcCer and GalCer, xylosylceramide/XylCer (such as beta-D-xyosyl-(1&lt;-&gt;1')-N-acylsphing-4-enine) is not a good substrate for hydrolysis, however it is a good xylose donor for transxylosylation activity to form cholesteryl 3-beta-D-xyloside. The sequence is that of Lysosomal acid glucosylceramidase (GBA1) from Sus scrofa (Pig).